Reading from the N-terminus, the 138-residue chain is MRITQGTFSFLPDLTDEQIKKQIDYMISKKLAIGIEYTNDIHPRNSFWEMWGLPLFEVTDPAPVLFEINACRKAKSNFYIKVVGFSSERGIESTIISFIVNRPKHEPGFNLIRQEDKSRSIKYSIQAYETYKPEDQRY.

The protein belongs to the RuBisCO small chain family. As to quaternary structure, heterohexadecamer of 8 large and 8 small subunits.

The protein resides in the plastid. Its subcellular location is the chloroplast. RuBisCO catalyzes two reactions: the carboxylation of D-ribulose 1,5-bisphosphate, the primary event in carbon dioxide fixation, as well as the oxidative fragmentation of the pentose substrate in the photorespiration process. Both reactions occur simultaneously and in competition at the same active site. Although the small subunit is not catalytic it is essential for maximal activity. Carbon dioxide and oxygen bind in the same pocket of the enzyme in a similar manner. The sequence is that of Ribulose bisphosphate carboxylase small subunit from Galdieria sulphuraria (Red alga).